The sequence spans 126 residues: Hydrogenase maturation factor HypA (126 aa).

His2 contributes to the Ni(2+) binding site. The Zn(2+) site is built by Cys78, Cys81, Cys97, and Cys100.

It belongs to the HypA/HybF family.

Functionally, involved in the maturation of [NiFe] hydrogenases. Required for nickel insertion into the metal center of the hydrogenase. This chain is Hydrogenase maturation factor HypA, found in Methanococcus maripaludis (strain DSM 14266 / JCM 13030 / NBRC 101832 / S2 / LL).